A 271-amino-acid chain; its full sequence is Glutamate racemase (271 aa).

Substrate contacts are provided by residues 10–11 and 42–43; these read DS and YG. The active-site Proton donor/acceptor is the Cys73. 74-75 is a binding site for substrate; the sequence is NT. The active-site Proton donor/acceptor is the Cys183. Residue 184 to 185 participates in substrate binding; it reads TH.

The protein belongs to the aspartate/glutamate racemases family.

The catalysed reaction is L-glutamate = D-glutamate. Its pathway is cell wall biogenesis; peptidoglycan biosynthesis. Functionally, provides the (R)-glutamate required for cell wall biosynthesis. The protein is Glutamate racemase of Lactococcus lactis subsp. lactis (strain IL1403) (Streptococcus lactis).